The chain runs to 244 residues: Putative membrane peptidase YdiL (244 aa).

The next 6 membrane-spanning stretches (helical) occupy residues 7 to 27 (FIIL…PLLF), 44 to 64 (AQGL…LLIL), 80 to 100 (IGLS…SQGI), 127 to 147 (AVPL…EIIF), 159 to 179 (TNFF…HADL), and 202 to 222 (IWVP…MQLE). Active-site proton donor/acceptor residues include Glu143 and His176.

The protein belongs to the peptidase U48 family.

The protein resides in the cell membrane. In terms of biological role, may function as endopeptidase which proteolytically removes the C-terminal three residues of farnesylated peptides containing the CAAX motif where C is cysteine, A is an aliphatic amino acid and X is any amino acid. The protein is Putative membrane peptidase YdiL (ydiL) of Bacillus subtilis (strain 168).